A 79-amino-acid polypeptide reads, in one-letter code: D-alanyl carrier protein (79 aa).

A Carrier domain is found at 1–77 (MDIKSEVLAI…KIVAGVTELC (77 aa)). Ser35 bears the O-(pantetheine 4'-phosphoryl)serine mark.

The protein belongs to the DltC family. Post-translationally, 4'-phosphopantetheine is transferred from CoA to a specific serine of apo-DCP.

It localises to the cytoplasm. Its pathway is cell wall biogenesis; lipoteichoic acid biosynthesis. In terms of biological role, carrier protein involved in the D-alanylation of lipoteichoic acid (LTA). The loading of thioester-linked D-alanine onto DltC is catalyzed by D-alanine--D-alanyl carrier protein ligase DltA. The DltC-carried D-alanyl group is further transferred to cell membrane phosphatidylglycerol (PG) by forming an ester bond, probably catalyzed by DltD. D-alanylation of LTA plays an important role in modulating the properties of the cell wall in Gram-positive bacteria, influencing the net charge of the cell wall. This is D-alanyl carrier protein from Streptococcus agalactiae serotype Ia (strain ATCC 27591 / A909 / CDC SS700).